The primary structure comprises 62 residues: Large ribosomal subunit protein bL32 (62 aa).

Residues 1–19 (MAVPKRKTSKTRRDKRRAS) are compositionally biased toward basic residues. Positions 1–20 (MAVPKRKTSKTRRDKRRASS) are disordered.

It belongs to the bacterial ribosomal protein bL32 family.

The chain is Large ribosomal subunit protein bL32 from Finegoldia magna (strain ATCC 29328 / DSM 20472 / WAL 2508) (Peptostreptococcus magnus).